Here is a 416-residue protein sequence, read N- to C-terminus: Isocitrate dehydrogenase [NADP] (416 aa).

NADP(+) is bound by residues 77–79 and Arg84; that span reads TIT. Thr79 is a binding site for substrate. Residues 96–102, Arg111, and Arg134 contribute to the substrate site; that span reads SPNGTIR. Asp254 contributes to the Mn(2+) binding site. Residue Lys262 coordinates NADP(+). Position 277 (Asp277) interacts with Mn(2+). NADP(+) is bound by residues 312 to 317 and Asn330; that span reads GTVTRH.

The protein belongs to the isocitrate and isopropylmalate dehydrogenases family. In terms of assembly, heterodimer. Mg(2+) serves as cofactor. It depends on Mn(2+) as a cofactor.

It is found in the cytoplasm. The catalysed reaction is D-threo-isocitrate + NADP(+) = 2-oxoglutarate + CO2 + NADPH. In terms of biological role, may supply 2-oxoglutarate for amino acid biosynthesis and ammonia assimilation via the glutamine synthetase/glutamate synthase (GS/GOGAT) pathway. The chain is Isocitrate dehydrogenase [NADP] (ICDH-1) from Solanum tuberosum (Potato).